A 173-amino-acid chain; its full sequence is Small ribosomal subunit protein mS25 (173 aa).

This sequence belongs to the mitochondrion-specific ribosomal protein mS25 family. In terms of assembly, component of the mitochondrial small ribosomal subunit (mt-SSU). Mature mammalian 55S mitochondrial ribosomes consist of a small (28S) and a large (39S) subunit. The 28S small subunit contains a 12S ribosomal RNA (12S mt-rRNA) and 30 different proteins. The 39S large subunit contains a 16S rRNA (16S mt-rRNA), a copy of mitochondrial valine transfer RNA (mt-tRNA(Val)), which plays an integral structural role, and 52 different proteins.

The protein localises to the mitochondrion. This chain is Small ribosomal subunit protein mS25 (MRPS25), found in Homo sapiens (Human).